We begin with the raw amino-acid sequence, 123 residues long: Ribulose bisphosphate carboxylase small subunit, chloroplastic 1 (123 aa).

At Met1 the chain carries Methionine derivative.

It belongs to the RuBisCO small chain family. As to quaternary structure, heterohexadecamer of 8 large and 8 small subunits.

The protein localises to the plastid. Its subcellular location is the chloroplast. Its function is as follows. RuBisCO catalyzes two reactions: the carboxylation of D-ribulose 1,5-bisphosphate, the primary event in carbon dioxide fixation, as well as the oxidative fragmentation of the pentose substrate. Both reactions occur simultaneously and in competition at the same active site. Although the small subunit is not catalytic it is essential for maximal activity. The protein is Ribulose bisphosphate carboxylase small subunit, chloroplastic 1 of Spinacia oleracea (Spinach).